A 90-amino-acid chain; its full sequence is Probable Fe(2+)-trafficking protein (90 aa).

Belongs to the Fe(2+)-trafficking protein family.

Its function is as follows. Could be a mediator in iron transactions between iron acquisition and iron-requiring processes, such as synthesis and/or repair of Fe-S clusters in biosynthetic enzymes. In Saccharophagus degradans (strain 2-40 / ATCC 43961 / DSM 17024), this protein is Probable Fe(2+)-trafficking protein.